Reading from the N-terminus, the 455-residue chain is Adenylyltransferase and sulfurtransferase MOCS3 (455 aa).

ATP is bound by residues glycine 90, aspartate 111, 118 to 122 (SNLAR), lysine 135, and 179 to 180 (DN). An interaction with NFS1 region spans residues 156–236 (AQALTPATAL…QPPPAETVTN (81 aa)). 2 residues coordinate Zn(2+): cysteine 220 and cysteine 223. Cysteine 237 (glycyl thioester intermediate; for adenylyltransferase activity) is an active-site residue. Zn(2+) contacts are provided by cysteine 295 and cysteine 298. Cysteine 314 and cysteine 322 form a disulfide bridge. In terms of domain architecture, Rhodanese spans 345-453 (SGSPHLLLDV…WAAKVDGTFP (109 aa)). Catalysis depends on cysteine 410, which acts as the Cysteine persulfide intermediate; for sulfurtransferase activity. Cysteine 410 bears the Cysteine persulfide mark.

This sequence in the N-terminal section; belongs to the HesA/MoeB/ThiF family. UBA4 subfamily. As to quaternary structure, interacts with NFS1. It depends on Zn(2+) as a cofactor.

Its subcellular location is the cytoplasm. The protein localises to the cytosol. The catalysed reaction is [molybdopterin-synthase sulfur-carrier protein]-C-terminal Gly-Gly + ATP + H(+) = [molybdopterin-synthase sulfur-carrier protein]-C-terminal Gly-Gly-AMP + diphosphate. It carries out the reaction [molybdopterin-synthase sulfur-carrier protein]-C-terminal Gly-Gly-AMP + S-sulfanyl-L-cysteinyl-[cysteine desulfurase] + AH2 = [molybdopterin-synthase sulfur-carrier protein]-C-terminal-Gly-aminoethanethioate + L-cysteinyl-[cysteine desulfurase] + A + AMP + 2 H(+). It participates in tRNA modification; 5-methoxycarbonylmethyl-2-thiouridine-tRNA biosynthesis. It functions in the pathway cofactor biosynthesis; molybdopterin biosynthesis. Functionally, plays a central role in 2-thiolation of mcm(5)S(2)U at tRNA wobble positions of cytosolic tRNA(Lys), tRNA(Glu) and tRNA(Gln). Also essential during biosynthesis of the molybdenum cofactor. Acts by mediating the C-terminal thiocarboxylation of sulfur carriers URM1 and MOCS2A. Its N-terminus first activates URM1 and MOCS2A as acyl-adenylates (-COAMP), then the persulfide sulfur on the catalytic cysteine is transferred to URM1 and MOCS2A to form thiocarboxylation (-COSH) of their C-terminus. The reaction probably involves hydrogen sulfide that is generated from the persulfide intermediate and that acts as a nucleophile towards URM1 and MOCS2A. Subsequently, a transient disulfide bond is formed. Does not use thiosulfate as sulfur donor; NFS1 acting as a sulfur donor for thiocarboxylation reactions. The protein is Adenylyltransferase and sulfurtransferase MOCS3 of Sus scrofa (Pig).